Here is a 414-residue protein sequence, read N- to C-terminus: Transposon Ty4-J Gag polyprotein (414 aa).

A coiled-coil region spans residues 39 to 115 (RKVSIKDEQV…IQLLETNENN (77 aa)). Residues 378 to 414 (GAQRQQPLKSSAKRTKVLEQDTKKVEQSVQQQKTGNY) form a disordered region. A compositionally biased stretch (basic and acidic residues) spans 393–403 (KVLEQDTKKVE). Residues 404–414 (QSVQQQKTGNY) are compositionally biased toward polar residues.

In terms of biological role, capsid protein (CA) is the structural component of the virus-like particle (VLP), forming the shell that encapsulates the retrotransposons dimeric RNA genome. The chain is Transposon Ty4-J Gag polyprotein (TY4A-J) from Saccharomyces cerevisiae (strain ATCC 204508 / S288c) (Baker's yeast).